The chain runs to 94 residues: Co-chaperonin GroES (94 aa).

The protein belongs to the GroES chaperonin family. As to quaternary structure, heptamer of 7 subunits arranged in a ring. Interacts with the chaperonin GroEL.

It is found in the cytoplasm. Functionally, together with the chaperonin GroEL, plays an essential role in assisting protein folding. The GroEL-GroES system forms a nano-cage that allows encapsulation of the non-native substrate proteins and provides a physical environment optimized to promote and accelerate protein folding. GroES binds to the apical surface of the GroEL ring, thereby capping the opening of the GroEL channel. This is Co-chaperonin GroES from Orientia tsutsugamushi (Rickettsia tsutsugamushi).